Reading from the N-terminus, the 538-residue chain is MGNPRGRRTNGSIKTSKGTQRGTVSNLLSDQPLAARPKVSIVSNDDSQDSSDGGAFTTPSTTESTLKTTINGTDSTERNMSRKPSSPMAPAFMVSAPGKVIVYGEHAVVHGKAAMAAAISLRSYLLVTTLSKSQRTITMNFRDIGLDHTWNIDELPWDVFHHPSKKKFYYDLVTSLDPELVAAIQPHADAVSPDKPEDVRKIHRRSASAFLYLFLSLGSSQNPGAIYTLRSTIPIGAGLGSSASVCVCLSAALLLQIRTLAGPHPDQPPDEAEVQIERINRWAFVGEMCTHGNPSGVDNTVSAGGKAVVFRREDYSKPPTVTPLLNFPELPLLLVDTRQSRSTAVEVAKVGKLKDEYPVVTDSILEAIDQVTLAAQQKIQEISTNGISYRTLEDLGTLIRINHGFLVSLGVSHPRLERIRELVDYADIGWTKLTGAGGGGCAITLLRPDIKEEAVRELEEKLSAEGFVKYETTLGGDGIGVLWPAVLRNGTDEEGGEEIDQQKFENAVGTEGIERLVGVGVQEKREGWKFWKRSPRFS.

Residues Met-1–Pro-87 form a disordered region. Residues Thr-9 to Ser-29 show a composition bias toward polar residues. Residues Thr-57 to Thr-69 show a composition bias toward low complexity. Residues Lys-99, Ser-231, and Gly-236–Ser-242 contribute to the ATP site. Mg(2+) is bound by residues Ser-242 and Glu-287. Asp-298 acts as the Proton acceptor in catalysis.

The protein belongs to the GHMP kinase family. Mevalonate kinase subfamily. Homodimer. Mg(2+) serves as cofactor.

The protein resides in the cytoplasm. Its subcellular location is the cytosol. The catalysed reaction is (R)-mevalonate + ATP = (R)-5-phosphomevalonate + ADP + H(+). The protein operates within isoprenoid biosynthesis; isopentenyl diphosphate biosynthesis via mevalonate pathway; isopentenyl diphosphate from (R)-mevalonate: step 1/3. Mevalonate kinase; part of the second module of ergosterol biosynthesis pathway that includes the middle steps of the pathway. Erg12 converts mevalonate into 5-phosphomevalonate. The second module is carried out in the vacuole and involves the formation of farnesyl diphosphate, which is also an important intermediate in the biosynthesis of ubiquinone, dolichol, heme and prenylated proteins. Activity by the mevalonate kinase erg12 (AFUA_4G07780) first converts mevalonate into 5-phosphomevalonate. 5-phosphomevalonate is then further converted to 5-diphosphomevalonate by the phosphomevalonate kinase erg8 (AFUA_5G10680). The diphosphomevalonate decarboxylase mvd1 (AFUA_4G07130) then produces isopentenyl diphosphate. The isopentenyl-diphosphate delta-isomerase idi1 (AFUA_6G11160) then catalyzes the 1,3-allylic rearrangement of the homoallylic substrate isopentenyl (IPP) to its highly electrophilic allylic isomer, dimethylallyl diphosphate (DMAPP). Finally the farnesyl diphosphate synthase erg20 (AFUA_5G02450) catalyzes the sequential condensation of isopentenyl pyrophosphate with dimethylallyl pyrophosphate, and then with the resultant geranylpyrophosphate to the ultimate product farnesyl pyrophosphate. This chain is Mevalonate kinase erg12, found in Aspergillus fumigatus (strain ATCC MYA-4609 / CBS 101355 / FGSC A1100 / Af293) (Neosartorya fumigata).